A 681-amino-acid polypeptide reads, in one-letter code: DNA-directed RNA polymerase subunit beta' (681 aa).

Cys69, Cys71, Cys87, and Cys90 together coordinate Zn(2+). 3 residues coordinate Mg(2+): Asp490, Asp492, and Asp494.

Belongs to the RNA polymerase beta' chain family. RpoC1 subfamily. In terms of assembly, in plastids the minimal PEP RNA polymerase catalytic core is composed of four subunits: alpha, beta, beta', and beta''. When a (nuclear-encoded) sigma factor is associated with the core the holoenzyme is formed, which can initiate transcription. The cofactor is Mg(2+). Zn(2+) serves as cofactor.

It localises to the plastid. The protein localises to the chloroplast. The enzyme catalyses RNA(n) + a ribonucleoside 5'-triphosphate = RNA(n+1) + diphosphate. Its function is as follows. DNA-dependent RNA polymerase catalyzes the transcription of DNA into RNA using the four ribonucleoside triphosphates as substrates. This Liriodendron tulipifera (Tuliptree) protein is DNA-directed RNA polymerase subunit beta'.